A 101-amino-acid polypeptide reads, in one-letter code: Small ribosomal subunit protein uS14 (101 aa).

Belongs to the universal ribosomal protein uS14 family. As to quaternary structure, part of the 30S ribosomal subunit. Contacts proteins S3 and S10.

Its function is as follows. Binds 16S rRNA, required for the assembly of 30S particles and may also be responsible for determining the conformation of the 16S rRNA at the A site. The sequence is that of Small ribosomal subunit protein uS14 from Chlamydia trachomatis serovar L2 (strain ATCC VR-902B / DSM 19102 / 434/Bu).